Reading from the N-terminus, the 673-residue chain is Inactive polyglycylase TTLL10 (673 aa).

The interval Met1–Gly132 is disordered. Residues Phe8–Ala36 show a composition bias toward basic residues. Residues Ala52–Gly62 show a composition bias toward pro residues. Residues Pro89 to Glu105 are compositionally biased toward basic and acidic residues. The region spanning Pro155–Lys552 is the TTL domain. ATP-binding positions include Gln362–Ile365, Lys375, and Asp377. The interval Glu569 to Pro673 is disordered. Pro residues predominate over residues Pro612–Pro627. Over residues Ala661–Pro673 the composition is skewed to basic and acidic residues.

Functionally, inactive polyglycylase. This is Inactive polyglycylase TTLL10 from Homo sapiens (Human).